Consider the following 258-residue polypeptide: MSKVKLTKESIVALLTQGKDLEFEEDQNLVAFNFKTFCLENLDQIKKMSIISCLTFLKNRQSIMKVIKQSDFTFGKITIKKTSDRIGATDMTFRRLDSLIRVRLVEETGNSENLNTIKSKIASHPLIQAYGLPLDDAKSVRLAIMLGGSLPLIASVDSFEMISVVLAIYQDAKYKDLGIDPKKYDTREALGKVCTVLKSKAFEMNEDQVKKGKEYAAILSSSNPNAKGSIAMEHYSETLNKFYEMFGVKKQAKLTELA.

Belongs to the tospovirus nucleocapsid protein family. Homotrimer. Binds the viral genomic RNA.

It localises to the virion. In terms of biological role, encapsidates the genome protecting it from nucleases. The encapsidated genomic RNA is termed the nucleocapsid (NC) and serves as template for transcription and replication. The NC have a helical organization. This is Nucleoprotein (N) from Frankliniella occidentalis (Western flower thrips).